A 149-amino-acid polypeptide reads, in one-letter code: METQRASLCLGRWSLWLLLLALVVPSASAQALSYREAVLRAVDRLNEQSSEANLYRLLELDQPPKADEDPGTPKPVSFTVKETVCPRPTRQPPELCDFKENGRVKQCVGTVTLDQIKDPLDITCNEVQGVRGGGLCYCRRRFCVCVGRG.

The N-terminal stretch at 1–29 (METQRASLCLGRWSLWLLLLALVVPSASA) is a signal peptide. A propeptide spanning residues 30–130 (QALSYREAVL…DITCNEVQGV (101 aa)) is cleaved from the precursor. The segment at 61–80 (DQPPKADEDPGTPKPVSFTV) is disordered. 4 disulfide bridges follow: cysteine 85–cysteine 96, cysteine 107–cysteine 124, cysteine 136–cysteine 145, and cysteine 138–cysteine 143. Arginine 148 is modified (arginine amide).

The protein belongs to the cathelicidin family.

The protein localises to the secreted. Its function is as follows. Microbicidal activity. Active against E.coli, Listeria monocytogenes and C.albicans, in vitro. This is Protegrin-3 (NPG3) from Sus scrofa (Pig).